The sequence spans 317 residues: Beta-ketoacyl-[acyl-carrier-protein] synthase III (317 aa).

Active-site residues include C112 and H244. The interval 245–249 (QANLR) is ACP-binding. N274 is a catalytic residue.

The protein belongs to the thiolase-like superfamily. FabH family. Homodimer.

The protein localises to the cytoplasm. It carries out the reaction malonyl-[ACP] + acetyl-CoA + H(+) = 3-oxobutanoyl-[ACP] + CO2 + CoA. It functions in the pathway lipid metabolism; fatty acid biosynthesis. Its function is as follows. Catalyzes the condensation reaction of fatty acid synthesis by the addition to an acyl acceptor of two carbons from malonyl-ACP. Catalyzes the first condensation reaction which initiates fatty acid synthesis and may therefore play a role in governing the total rate of fatty acid production. Possesses both acetoacetyl-ACP synthase and acetyl transacylase activities. Its substrate specificity determines the biosynthesis of branched-chain and/or straight-chain of fatty acids. The chain is Beta-ketoacyl-[acyl-carrier-protein] synthase III from Baumannia cicadellinicola subsp. Homalodisca coagulata.